Here is a 487-residue protein sequence, read N- to C-terminus: 1-aminocyclopropane-1-carboxylate synthase 1 (487 aa).

The residue at position 286 (lysine 286) is an N6-(pyridoxal phosphate)lysine.

It belongs to the class-I pyridoxal-phosphate-dependent aminotransferase family. As to quaternary structure, homodimer. Pyridoxal 5'-phosphate serves as cofactor.

It catalyses the reaction S-adenosyl-L-methionine = 1-aminocyclopropane-1-carboxylate + S-methyl-5'-thioadenosine + H(+). The protein operates within alkene biosynthesis; ethylene biosynthesis via S-adenosyl-L-methionine; ethylene from S-adenosyl-L-methionine: step 1/2. In terms of biological role, catalyzes the formation of 1-aminocyclopropane-1-carboxylate, a direct precursor of ethylene in higher plants. The chain is 1-aminocyclopropane-1-carboxylate synthase 1 (ACC1) from Oryza sativa subsp. indica (Rice).